A 244-amino-acid polypeptide reads, in one-letter code: E3 ubiquitin-protein ligase RNF166 (244 aa).

The interval 10–30 is disordered; the sequence is AQRPQAPGPGPPRPPPPAGPA. Residues 15–28 show a composition bias toward pro residues; it reads APGPGPPRPPPPAG. The RING-type zinc-finger motif lies at 40–80; it reads CPICLEVFHRAVGIAGCGHTFCGECLQPCLQVPSPLCPLCR. Zn(2+) contacts are provided by cysteine 105, cysteine 108, histidine 120, and cysteine 124. Residues 105-124 form a C2HC RNF-type zinc finger; sequence CRGCSKKVTLAKMRSHVSSC. The UIM domain maps to 228–244; sequence DEEAALQAALALSLSEN.

It localises to the cytoplasm. It carries out the reaction S-ubiquitinyl-[E2 ubiquitin-conjugating enzyme]-L-cysteine + [acceptor protein]-L-lysine = [E2 ubiquitin-conjugating enzyme]-L-cysteine + N(6)-ubiquitinyl-[acceptor protein]-L-lysine.. Its pathway is protein modification; protein ubiquitination. In terms of biological role, E3 ubiquitin-protein ligase that promotes the ubiquitination of different substrates. This Gallus gallus (Chicken) protein is E3 ubiquitin-protein ligase RNF166 (RNF166).